Here is a 520-residue protein sequence, read N- to C-terminus: Dynein axonemal assembly factor 8 (520 aa).

Disordered regions lie at residues 93-202 (PVLV…LRQE), 217-256 (RDAC…EGPP), 328-366 (CARK…QLAQ), and 388-520 (DHLS…LEQL). Over residues 111–125 (RTKDASSQEGRDPGR) the composition is skewed to basic and acidic residues. At S161 the chain carries Phosphoserine. S351 is modified (phosphoserine). The span at 401 to 410 (DSEEEEEEEM) shows a compositional bias: acidic residues. A compositionally biased stretch (polar residues) spans 420–437 (SPSSLGLRTCTGKSQLLQ).

In terms of tissue distribution, expressed in respiratory ciliated cells (at protein level).

It localises to the dynein axonemal particle. Its subcellular location is the cytoplasm. In terms of biological role, in cyliated cells, dynein axonemal particle-specific protein required for deployment of ODA to the axoneme. Interacts with outer dynein arm (ODA) subunits. The sequence is that of Dynein axonemal assembly factor 8 from Homo sapiens (Human).